A 269-amino-acid chain; its full sequence is Hydroxyethylthiazole kinase (269 aa).

M45 contributes to the substrate binding site. Positions 121 and 167 each coordinate ATP. Residue G194 participates in substrate binding.

The protein belongs to the Thz kinase family. It depends on Mg(2+) as a cofactor.

It carries out the reaction 5-(2-hydroxyethyl)-4-methylthiazole + ATP = 4-methyl-5-(2-phosphooxyethyl)-thiazole + ADP + H(+). The protein operates within cofactor biosynthesis; thiamine diphosphate biosynthesis; 4-methyl-5-(2-phosphoethyl)-thiazole from 5-(2-hydroxyethyl)-4-methylthiazole: step 1/1. Functionally, catalyzes the phosphorylation of the hydroxyl group of 4-methyl-5-beta-hydroxyethylthiazole (THZ). This is Hydroxyethylthiazole kinase from Bacillus cereus (strain ATCC 14579 / DSM 31 / CCUG 7414 / JCM 2152 / NBRC 15305 / NCIMB 9373 / NCTC 2599 / NRRL B-3711).